The primary structure comprises 91 residues: MARMIQCAKLGKEAEGLDFPPLPGELGKRIYESVSKEAWQGWLKQQTMLINENRLNMADPRARQYLMKQTEKYFFGDGADQASGYVPPTEG.

It belongs to the Fe(2+)-trafficking protein family.

Could be a mediator in iron transactions between iron acquisition and iron-requiring processes, such as synthesis and/or repair of Fe-S clusters in biosynthetic enzymes. The chain is Probable Fe(2+)-trafficking protein from Burkholderia cenocepacia (strain ATCC BAA-245 / DSM 16553 / LMG 16656 / NCTC 13227 / J2315 / CF5610) (Burkholderia cepacia (strain J2315)).